Reading from the N-terminus, the 368-residue chain is UDP-N-acetylglucosamine--N-acetylmuramyl-(pentapeptide) pyrophosphoryl-undecaprenol N-acetylglucosamine transferase (368 aa).

Residues 11–13 (TGG), Asn123, Arg164, Ser188, Ile250, and Gln295 each bind UDP-N-acetyl-alpha-D-glucosamine.

It belongs to the glycosyltransferase 28 family. MurG subfamily.

It is found in the cell inner membrane. The catalysed reaction is di-trans,octa-cis-undecaprenyl diphospho-N-acetyl-alpha-D-muramoyl-L-alanyl-D-glutamyl-meso-2,6-diaminopimeloyl-D-alanyl-D-alanine + UDP-N-acetyl-alpha-D-glucosamine = di-trans,octa-cis-undecaprenyl diphospho-[N-acetyl-alpha-D-glucosaminyl-(1-&gt;4)]-N-acetyl-alpha-D-muramoyl-L-alanyl-D-glutamyl-meso-2,6-diaminopimeloyl-D-alanyl-D-alanine + UDP + H(+). It participates in cell wall biogenesis; peptidoglycan biosynthesis. In terms of biological role, cell wall formation. Catalyzes the transfer of a GlcNAc subunit on undecaprenyl-pyrophosphoryl-MurNAc-pentapeptide (lipid intermediate I) to form undecaprenyl-pyrophosphoryl-MurNAc-(pentapeptide)GlcNAc (lipid intermediate II). This is UDP-N-acetylglucosamine--N-acetylmuramyl-(pentapeptide) pyrophosphoryl-undecaprenol N-acetylglucosamine transferase from Solidesulfovibrio magneticus (strain ATCC 700980 / DSM 13731 / RS-1) (Desulfovibrio magneticus).